The sequence spans 287 residues: Inorganic pyrophosphatase (287 aa).

Phosphothreonine is present on T65. R79 contributes to the diphosphate binding site. Y90 functions as the Proton donor in the catalytic mechanism. Residues D116, D121, and D153 each coordinate Mg(2+). K239 participates in a covalent cross-link: Glycyl lysine isopeptide (Lys-Gly) (interchain with G-Cter in ubiquitin). A Phosphothreonine modification is found at T251. A Phosphoserine modification is found at S266. A Glycyl lysine isopeptide (Lys-Gly) (interchain with G-Cter in ubiquitin) cross-link involves residue K279. Residue S286 is modified to Phosphoserine.

Belongs to the PPase family. Homodimer. It depends on Mg(2+) as a cofactor.

It localises to the cytoplasm. The catalysed reaction is diphosphate + H2O = 2 phosphate + H(+). In Saccharomyces cerevisiae (strain ATCC 204508 / S288c) (Baker's yeast), this protein is Inorganic pyrophosphatase (IPP1).